Reading from the N-terminus, the 355-residue chain is UDP-N-acetylglucosamine--N-acetylmuramyl-(pentapeptide) pyrophosphoryl-undecaprenol N-acetylglucosamine transferase (355 aa).

Residues 15–17 (TGG), Asn127, Arg163, Ser191, Ile244, 263–268 (ALTVSE), and Gln288 each bind UDP-N-acetyl-alpha-D-glucosamine.

This sequence belongs to the glycosyltransferase 28 family. MurG subfamily.

Its subcellular location is the cell inner membrane. The catalysed reaction is di-trans,octa-cis-undecaprenyl diphospho-N-acetyl-alpha-D-muramoyl-L-alanyl-D-glutamyl-meso-2,6-diaminopimeloyl-D-alanyl-D-alanine + UDP-N-acetyl-alpha-D-glucosamine = di-trans,octa-cis-undecaprenyl diphospho-[N-acetyl-alpha-D-glucosaminyl-(1-&gt;4)]-N-acetyl-alpha-D-muramoyl-L-alanyl-D-glutamyl-meso-2,6-diaminopimeloyl-D-alanyl-D-alanine + UDP + H(+). It functions in the pathway cell wall biogenesis; peptidoglycan biosynthesis. Cell wall formation. Catalyzes the transfer of a GlcNAc subunit on undecaprenyl-pyrophosphoryl-MurNAc-pentapeptide (lipid intermediate I) to form undecaprenyl-pyrophosphoryl-MurNAc-(pentapeptide)GlcNAc (lipid intermediate II). This is UDP-N-acetylglucosamine--N-acetylmuramyl-(pentapeptide) pyrophosphoryl-undecaprenol N-acetylglucosamine transferase from Escherichia coli O127:H6 (strain E2348/69 / EPEC).